The primary structure comprises 614 residues: MPMYRSRTSTHGRNMAGARGLWRATGMTESDFGKPIIAIVNSFTQFVPGHVHLKDLGQMVAREVESAGGVAKEFNTIAVDDGIAMGHDGMLYSLPSREVIADSVEYMVNAHCADAMVCISNCDKITPGMMMAAMRLNIPVIFVSGGPMEAGKIDIDSLDAKKIDLVDAMVAAASDKLTDEEVQHIEENACPTCGSCSGMFTANSMNCLAEALGLALPGNGSTLATHSDRKQLFLEAGRKIVEITKRHYEQNEKGLLPREIATFEAFENAMSLDIAMGGSTNTVLHLLAIAHEGKVDFTMQDIDRLSRKVPCLCKVAPNIENVHMEDVHRAGGIFSILGELSRAGLLHNDVPTVHSDSMGEAIAHWDIAVADNQAAKDLFKAAPGGVRTTQAFSQSNRFKDLDIDRKGGVIRSKEHAFSQDGGLAVLFGNIALDGCIVKTAGVDASILKFTGKAYVCESQDQAVNDILTGKVQAGDVVVIRYEGPRGGPGMQEMLYPTSYLKSKGLGKDCALLTDGRFSGGTSGLSIGHVSPEAAEGGTIGLVEHGDTIEIDIPNRSIHLAVDEATLAARRAAQDEKGWKPVAKRKRKVSTALKAYALLATSAAKGAVRQLPDDE.

Asp-81 lines the Mg(2+) pocket. Position 122 (Cys-122) interacts with [2Fe-2S] cluster. The Mg(2+) site is built by Asp-123 and Lys-124. An N6-carboxylysine modification is found at Lys-124. Cys-196 is a binding site for [2Fe-2S] cluster. Glu-492 lines the Mg(2+) pocket. Ser-518 functions as the Proton acceptor in the catalytic mechanism.

Belongs to the IlvD/Edd family. As to quaternary structure, homodimer. Requires [2Fe-2S] cluster as cofactor. It depends on Mg(2+) as a cofactor.

It carries out the reaction (2R)-2,3-dihydroxy-3-methylbutanoate = 3-methyl-2-oxobutanoate + H2O. The enzyme catalyses (2R,3R)-2,3-dihydroxy-3-methylpentanoate = (S)-3-methyl-2-oxopentanoate + H2O. The protein operates within amino-acid biosynthesis; L-isoleucine biosynthesis; L-isoleucine from 2-oxobutanoate: step 3/4. It participates in amino-acid biosynthesis; L-valine biosynthesis; L-valine from pyruvate: step 3/4. In terms of biological role, functions in the biosynthesis of branched-chain amino acids. Catalyzes the dehydration of (2R,3R)-2,3-dihydroxy-3-methylpentanoate (2,3-dihydroxy-3-methylvalerate) into 2-oxo-3-methylpentanoate (2-oxo-3-methylvalerate) and of (2R)-2,3-dihydroxy-3-methylbutanoate (2,3-dihydroxyisovalerate) into 2-oxo-3-methylbutanoate (2-oxoisovalerate), the penultimate precursor to L-isoleucine and L-valine, respectively. This is Dihydroxy-acid dehydratase from Ruegeria sp. (strain TM1040) (Silicibacter sp.).